The chain runs to 557 residues: Selenoprotein N (557 aa).

The interval 1–24 (MGQARPAARRPHSPDPGAQPAPPR) is disordered. Residues 1–42 (MGQARPAARRPHSPDPGAQPAPPRRRARALALLGALLAAAAA) form the signal peptide. The EF-hand domain maps to 67–102 (VLGTDGLFLFSSLDTDQDMYISPEEFKPIAEKLTGS). Residue Asn-156 is glycosylated (N-linked (GlcNAc...) asparagine). Position 428 (Sec-428) is a non-standard amino acid, selenocysteine. N-linked (GlcNAc...) asparagine glycosylation is found at Asn-449 and Asn-497.

As to quaternary structure, interacts with RYR1, RYR2 and RYR3. N-glycosylated.

It is found in the endoplasmic reticulum membrane. Plays an important role in cell protection against oxidative stress and in the regulation of redox-related calcium homeostasis. Regulates the calcium level of the ER by protecting the calcium pump ATP2A2 against the oxidoreductase ERO1A-mediated oxidative damage. Within the ER, ERO1A activity increases the concentration of H(2)O(2), which attacks the luminal thiols in ATP2A2 and thus leads to cysteinyl sulfenic acid formation (-SOH) and SEPN1 reduces the SOH back to free thiol (-SH), thus restoring ATP2A2 activity. Acts as a modulator of ryanodine receptor (RyR) activity: protects RyR from oxidation due to increased oxidative stress, or directly controls the RyR redox state, regulating the RyR-mediated calcium mobilization required for normal muscle development and differentiation. Essential for muscle regeneration and satellite cell maintenance in skeletal muscle. The protein is Selenoprotein N of Mus musculus (Mouse).